A 358-amino-acid chain; its full sequence is UDP-3-O-acylglucosamine N-acyltransferase (358 aa).

H248 acts as the Proton acceptor in catalysis.

The protein belongs to the transferase hexapeptide repeat family. LpxD subfamily. As to quaternary structure, homotrimer.

The enzyme catalyses a UDP-3-O-[(3R)-3-hydroxyacyl]-alpha-D-glucosamine + a (3R)-hydroxyacyl-[ACP] = a UDP-2-N,3-O-bis[(3R)-3-hydroxyacyl]-alpha-D-glucosamine + holo-[ACP] + H(+). It participates in bacterial outer membrane biogenesis; LPS lipid A biosynthesis. Functionally, catalyzes the N-acylation of UDP-3-O-acylglucosamine using 3-hydroxyacyl-ACP as the acyl donor. Is involved in the biosynthesis of lipid A, a phosphorylated glycolipid that anchors the lipopolysaccharide to the outer membrane of the cell. This Synechococcus sp. (strain WH7803) protein is UDP-3-O-acylglucosamine N-acyltransferase.